The following is a 242-amino-acid chain: Small ribosomal subunit protein uS2 (242 aa).

Belongs to the universal ribosomal protein uS2 family.

The protein is Small ribosomal subunit protein uS2 of Mannheimia succiniciproducens (strain KCTC 0769BP / MBEL55E).